The primary structure comprises 100 residues: Integration host factor subunit alpha (100 aa).

The protein belongs to the bacterial histone-like protein family. As to quaternary structure, heterodimer of an alpha and a beta chain.

In terms of biological role, this protein is one of the two subunits of integration host factor, a specific DNA-binding protein that functions in genetic recombination as well as in transcriptional and translational control. Involved in hydrogenase gene expression. The polypeptide is Integration host factor subunit alpha (ihfA) (Rhodobacter capsulatus (Rhodopseudomonas capsulata)).